Reading from the N-terminus, the 595-residue chain is uncharacterized protein (595 aa).

Disordered stretches follow at residues 50-159 (VNPS…KTKK), 398-430 (TYPT…PPSL), and 450-595 (VTEG…SLDK). Positions 83–122 (SNKSSALKKSNKSSNKSSNKSSNKSSNKSSNKSSNKSSNK) are enriched in low complexity. Basic and acidic residues predominate over residues 123 to 132 (FPDKSDKSDS). Residues 137–146 (DNSDDSDDSS) are compositionally biased toward acidic residues. A compositionally biased stretch (low complexity) spans 398 to 409 (TYPTTPLFSEPT). Over residues 410 to 420 (IPKPPQQPTTE) the composition is skewed to pro residues. Low complexity predominate over residues 421 to 430 (PPSGFKPPSL). Residues 454 to 463 (KVVESDDHTS) are compositionally biased toward basic and acidic residues. Pro residues predominate over residues 467 to 476 (IPPPPPPPPS). Low complexity predominate over residues 477–529 (ISSDNSSPNKSVKSSTKSSTKSSTKSSTKSSTKSSTKSPSKTPVKSPIKSSSK). Residues 530–542 (LSDKKSPTKKIES) are compositionally biased toward basic and acidic residues. Positions 544-553 (GESDSESDSE) are enriched in acidic residues. Residues 559–570 (TKKSTNKIKKIT) are compositionally biased toward basic residues. The segment covering 571–580 (NNKLENSNTK) has biased composition (low complexity). Over residues 581–595 (NNKKFSKKKTISLDK) the composition is skewed to basic residues.

This is an uncharacterized protein from Acanthamoeba polyphaga mimivirus (APMV).